The primary structure comprises 96 residues: Small ribosomal subunit protein bS6 (96 aa).

The protein belongs to the bacterial ribosomal protein bS6 family.

Its function is as follows. Binds together with bS18 to 16S ribosomal RNA. In Streptococcus suis (strain 98HAH33), this protein is Small ribosomal subunit protein bS6.